Reading from the N-terminus, the 432-residue chain is Putative transferase At1g60990, chloroplastic (432 aa).

The N-terminal 57 residues, 1-57 (MNLLQSCKDMAMMMRIDSVSHITNTALLPCLYNGTVLRRRSLSLRKCGFRERKFQLR), are a transit peptide targeting the chloroplast.

Belongs to the GcvT family. In terms of tissue distribution, expressed in young leaves (at protein level).

The protein localises to the plastid. The protein resides in the chloroplast. Its function is as follows. Folate-dependent protein involved in Fe/S cluster biogenesis. Functionally complements an E.coli mutant defective in ygfZ. This chain is Putative transferase At1g60990, chloroplastic, found in Arabidopsis thaliana (Mouse-ear cress).